A 210-amino-acid chain; its full sequence is 3-hexulose-6-phosphate synthase (210 aa).

This sequence belongs to the HPS/KGPDC family. HPS subfamily.

It catalyses the reaction D-ribulose 5-phosphate + formaldehyde = D-arabino-hex-3-ulose 6-phosphate. It functions in the pathway one-carbon metabolism; formaldehyde assimilation via RuMP pathway; D-fructose 6-phosphate from D-ribulose 5-phosphate and formaldehyde: step 1/2. In terms of biological role, catalyzes the condensation of ribulose 5-phosphate with formaldehyde to form 3-hexulose 6-phosphate. The protein is 3-hexulose-6-phosphate synthase of Staphylococcus aureus (strain USA300).